Reading from the N-terminus, the 478-residue chain is WD repeat-containing protein AAC3 (478 aa).

2 disordered regions span residues His33 to Gln53 and Ser106 to Asn140. The segment covering Ser106 to Ser125 has biased composition (low complexity). Positions Lys126–Asn140 are enriched in polar residues. WD repeat units lie at residues Gly163–Asn202, Gly226–Ser268, Asn270–Ile307, Phe310–Val349, Gly357–Thr396, Lys399–Thr438, and Glu440–Ser478.

The protein belongs to the THOC3 family.

The protein is WD repeat-containing protein AAC3 (AAC3) of Dictyostelium discoideum (Social amoeba).